Reading from the N-terminus, the 65-residue chain is Large ribosomal subunit protein bL31 (65 aa).

Residues Cys16, Cys18, Cys36, and Cys39 each contribute to the Zn(2+) site.

It belongs to the bacterial ribosomal protein bL31 family. Type A subfamily. In terms of assembly, part of the 50S ribosomal subunit. It depends on Zn(2+) as a cofactor.

In terms of biological role, binds the 23S rRNA. The polypeptide is Large ribosomal subunit protein bL31 (Campylobacter jejuni subsp. doylei (strain ATCC BAA-1458 / RM4099 / 269.97)).